A 151-amino-acid chain; its full sequence is Methylated-DNA--protein-cysteine methyltransferase (151 aa).

Cys-119 acts as the Nucleophile; methyl group acceptor in catalysis.

This sequence belongs to the MGMT family.

Its subcellular location is the cytoplasm. The catalysed reaction is a 6-O-methyl-2'-deoxyguanosine in DNA + L-cysteinyl-[protein] = S-methyl-L-cysteinyl-[protein] + a 2'-deoxyguanosine in DNA. It catalyses the reaction a 4-O-methyl-thymidine in DNA + L-cysteinyl-[protein] = a thymidine in DNA + S-methyl-L-cysteinyl-[protein]. Involved in the cellular defense against the biological effects of O6-methylguanine (O6-MeG) and O4-methylthymine (O4-MeT) in DNA. Repairs the methylated nucleobase in DNA by stoichiometrically transferring the methyl group to a cysteine residue in the enzyme. This is a suicide reaction: the enzyme is irreversibly inactivated. This chain is Methylated-DNA--protein-cysteine methyltransferase, found in Saccharolobus islandicus (strain M.16.27) (Sulfolobus islandicus).